Here is a 351-residue protein sequence, read N- to C-terminus: MADTEKSLQSLDPIPVDVLFEIFLNLPAKFLARFVCVSKLWAKIIRNQDFIRSFSFRSFRENKQHRLLFAFKNQIKGYQENWYFFSKSTHVSTPLYEPNSLVLPDQNINKFEALVGEEPPDFESSTVCHLKKMRYQNPSYVHGLISFLYGEEQIICNPSIGKSINLPTLGSSETIIGSFLGYDPIHAQYKVLCLNKSSLQFCGHQVLTLGAQNCSWRMIQCPTPHYPGTTSVCIDGVLYYSASRGFTMHEPLNLVRFDLRTESLEIASVFPEDFKSSVKPSLINYRGKVAVFSKYFCGDFGLWVLEDAKKQQWSKEQRISIRRGVIGRLPQGLQILGTSDMGEVIFAPNYF.

One can recognise an F-box domain in the interval 8–54 (LQSLDPIPVDVLFEIFLNLPAKFLARFVCVSKLWAKIIRNQDFIRSF).

This is F-box protein At1g47810 from Arabidopsis thaliana (Mouse-ear cress).